The following is a 273-amino-acid chain: NADPH-dependent 7-cyano-7-deazaguanine reductase (273 aa).

A substrate-binding site is contributed by 80-82 (VES). 82–83 (SK) provides a ligand contact to NADPH. The Thioimide intermediate role is filled by C180. Residue D187 is the Proton donor of the active site. 219-220 (HE) contributes to the substrate binding site. An NADPH-binding site is contributed by 248-249 (RG).

This sequence belongs to the GTP cyclohydrolase I family. QueF type 2 subfamily. In terms of assembly, homodimer.

Its subcellular location is the cytoplasm. It carries out the reaction 7-aminomethyl-7-carbaguanine + 2 NADP(+) = 7-cyano-7-deazaguanine + 2 NADPH + 3 H(+). The protein operates within tRNA modification; tRNA-queuosine biosynthesis. Catalyzes the NADPH-dependent reduction of 7-cyano-7-deazaguanine (preQ0) to 7-aminomethyl-7-deazaguanine (preQ1). This is NADPH-dependent 7-cyano-7-deazaguanine reductase from Bordetella bronchiseptica (strain ATCC BAA-588 / NCTC 13252 / RB50) (Alcaligenes bronchisepticus).